The following is a 346-amino-acid chain: Cell shape-determining protein MreC (346 aa).

Residues 89–118 (NRRLKAELAEMRQWRDRALALQDQNDRFKS) are a coiled coil. The tract at residues 292-346 (SLPPVTTEDPQTSILSNPVSRPVAPTPSPATATPSAAPAARPATTATPPQTGAPR) is disordered. Over residues 299–308 (EDPQTSILSN) the composition is skewed to polar residues. A compositionally biased stretch (low complexity) spans 309-340 (PVSRPVAPTPSPATATPSAAPAARPATTATPP).

It belongs to the MreC family. In terms of assembly, interacts with penicillin-binding proteins (PBP2, PBP1a, PBP1b, PBP2a and PBP2b). Interacts with outer membrane proteins belonging to the TonB-dependent receptor family of transport proteins.

Its subcellular location is the periplasm. Functionally, involved in formation and maintenance of cell shape. Required for the spatial organization of components of the peptidoglycan-synthesizing holoenzyme in the periplasm and peptidoglycan synthetic activity. The sequence is that of Cell shape-determining protein MreC from Caulobacter vibrioides (strain NA1000 / CB15N) (Caulobacter crescentus).